The primary structure comprises 570 residues: AT-rich interactive domain-containing protein 3A (570 aa).

The interval 102–215 (AGVPNSSSGH…LAPQAQSQHH (114 aa)) is disordered. Positions 120–160 (DIDDEDDEDDDPELDRGMDDEERDMDEDDSMNEGGGDEDLE) are enriched in acidic residues. Ser179 bears the Phosphoserine mark. Residues 232–324 (DEKRKEFLDD…YLYPYECEKR (93 aa)) form the ARID domain. Ser356 bears the Phosphoserine mark. Positions 429 to 523 (AALEQLREKL…GVLFARKPAI (95 aa)) constitute an REKLES domain. Residues 430–473 (ALEQLREKLESGEPPEKKVMLMAEEQQRIMQHALQQNLFAMATQ) form an important for nuclear localization region. Positions 475–495 (PMNIKLNNRDDRQETALNLST) are homodimerization. Positions 519–531 (RKPAIGFMPSSQR) are important for cytoplasmic localization. The tract at residues 528–570 (SSQRVHHQHSSQGKSNSPGLSSHIQPSSSASSSASSHGPATSP) is disordered. A phosphoserine mark is found at Ser542 and Ser569. A compositionally biased stretch (low complexity) spans 548 to 570 (SSHIQPSSSASSSASSHGPATSP).

In terms of assembly, homodimer.

Its subcellular location is the nucleus. The protein resides in the cytoplasm. In terms of biological role, transcription factor. The sequence is that of AT-rich interactive domain-containing protein 3A (arid3a) from Danio rerio (Zebrafish).